A 485-amino-acid chain; its full sequence is MDNKLDIKAFLDKDEQKDLLRLLTAGSVDDGKSTLIGRLLFDSKKLYEDQLDALERDSKRVGNAGEHIDYALLLDGLKAEREQGITIDVAYRYFSTNGRKFIIADTPGHEQYTRNMITGGSTANLAIILVDARTGVITQTRRHTFLVSLLGIKHVVLAVNKMDLVDFSEERFDEIVSEYKKFVEPLGIPDVNCIPLSALDGDNVVDKSERTPWYKGISLLDFLETVHIDNDHNFTDFRFPVQYVLRPNLDFRGFCGKVASGIVRKGDTVMALPSGKTSKVKSIVTYDGELDYAFPPQSVTLTLEDEIDVSRGEMLVHPDNLPIVDRNFEAMMVWMDEEPMDINKSFFIKQTTNLSRTRIDAIKYKVDVNTMEHLSIDNGQLTKDNLPLQLNQIARVVLTTAKELFFDPYKKNKSCGSFILIDPITNNTSAVGMIIDRVEMKDMAATDDIPVLDLSKLDIAPEHHAAIEKVVKELERQGLSIKVIK.

The region spanning 17–232 (KDLLRLLTAG…LETVHIDNDH (216 aa)) is the tr-type G domain. Residues 26–33 (GSVDDGKS) form a G1 region. Position 26–33 (26–33 (GSVDDGKS)) interacts with GTP. The tract at residues 84 to 88 (GITID) is G2. Positions 105–108 (DTPG) are G3. GTP-binding positions include 105–109 (DTPGH) and 160–163 (NKMD). The segment at 160-163 (NKMD) is G4. The G5 stretch occupies residues 197–199 (SAL).

It belongs to the TRAFAC class translation factor GTPase superfamily. Classic translation factor GTPase family. CysN/NodQ subfamily. As to quaternary structure, heterodimer composed of CysD, the smaller subunit, and CysN.

It carries out the reaction sulfate + ATP + H(+) = adenosine 5'-phosphosulfate + diphosphate. Its pathway is sulfur metabolism; hydrogen sulfide biosynthesis; sulfite from sulfate: step 1/3. Its function is as follows. With CysD forms the ATP sulfurylase (ATPS) that catalyzes the adenylation of sulfate producing adenosine 5'-phosphosulfate (APS) and diphosphate, the first enzymatic step in sulfur assimilation pathway. APS synthesis involves the formation of a high-energy phosphoric-sulfuric acid anhydride bond driven by GTP hydrolysis by CysN coupled to ATP hydrolysis by CysD. The polypeptide is Sulfate adenylyltransferase subunit 1 (Bacteroides thetaiotaomicron (strain ATCC 29148 / DSM 2079 / JCM 5827 / CCUG 10774 / NCTC 10582 / VPI-5482 / E50)).